The sequence spans 516 residues: D-aminopeptidase (516 aa).

Ser-61 functions as the Nucleophile in the catalytic mechanism. Residue Lys-64 is the Proton donor/acceptor of the active site. Positions 476 to 486 (RRSMDAPAPGD) are important for specificity. Substrate is bound at residue Asp-480.

The protein belongs to the peptidase S12 family. As to quaternary structure, homodimer.

The enzyme catalyses Release of an N-terminal D-amino acid from a peptide, Xaa-|-Yaa-, in which Xaa is preferably D-Ala, D-Ser or D-Thr. D-amino acid amides and methyl esters also are hydrolyzed, as is glycine amide.. Inhibited by beta-lactam compounds such as 6-aminopenicillic acid, 7-aminocephalosporanic acid, benzylpenicillin and ampicillin. Inhibited by p-chloromercuribenzoate. Hydrolyzes N-terminal residues in D-amino acid-containing peptides. In Cereibacter sphaeroides (strain ATCC 17029 / ATH 2.4.9) (Rhodobacter sphaeroides), this protein is D-aminopeptidase.